A 252-amino-acid chain; its full sequence is MLAKRIIAALDIKEGRVVKGIKFQNIRDAGDPIELARRYEEEGIDEIVFLDITASFEKRKILLDLVKRIAEEIYVPFTVGGGIKSVEEIREIIKSGADKVFLNTAAVNNPELVREAAKVVGSANLVIAIDAKWNGEYWEVYTHGGRKARGINAVEWAKEVERLGAGEILLTSMDTDGTQEGFDIPLTKAIVEAVDIPVIASGGAGSPEHFYEAFKIGAEAALAASIFHYGKYTVRELKEYLAEKGIPVRLNY.

Residues Asp11 and Asp130 contribute to the active site.

The protein belongs to the HisA/HisF family. Heterodimer of HisH and HisF.

The protein resides in the cytoplasm. It catalyses the reaction 5-[(5-phospho-1-deoxy-D-ribulos-1-ylimino)methylamino]-1-(5-phospho-beta-D-ribosyl)imidazole-4-carboxamide + L-glutamine = D-erythro-1-(imidazol-4-yl)glycerol 3-phosphate + 5-amino-1-(5-phospho-beta-D-ribosyl)imidazole-4-carboxamide + L-glutamate + H(+). It functions in the pathway amino-acid biosynthesis; L-histidine biosynthesis; L-histidine from 5-phospho-alpha-D-ribose 1-diphosphate: step 5/9. In terms of biological role, IGPS catalyzes the conversion of PRFAR and glutamine to IGP, AICAR and glutamate. The HisF subunit catalyzes the cyclization activity that produces IGP and AICAR from PRFAR using the ammonia provided by the HisH subunit. The chain is Imidazole glycerol phosphate synthase subunit HisF from Thermococcus onnurineus (strain NA1).